A 195-amino-acid chain; its full sequence is TM2 domain-containing protein C41D11.9 (195 aa).

The signal sequence occupies residues 1–20; it reads MLHKILFLICLASFIPTIGS. The Extracellular portion of the chain corresponds to 21–136; the sequence is ISGTKDVKSK…NWSSGYSWTK (116 aa). N-linked (GlcNAc...) asparagine glycosylation is found at Asn-55, Asn-93, and Asn-127. The region spanning 131–179 is the TM2 domain; that stretch reads GYSWTKTMILSVVLGGFGADRFYLGLWKSAIGKLFSFGGLGVWTLVDVV. The chain crosses the membrane as a helical span at residues 137–157; that stretch reads TMILSVVLGGFGADRFYLGLW. Residues 158–163 lie on the Cytoplasmic side of the membrane; that stretch reads KSAIGK. Residues 164–184 form a helical membrane-spanning segment; it reads LFSFGGLGVWTLVDVVLIAVG. The Extracellular portion of the chain corresponds to 185–195; it reads YIKPYDGSMYI.

This sequence belongs to the TM2 family.

The protein resides in the membrane. The chain is TM2 domain-containing protein C41D11.9 from Caenorhabditis elegans.